The primary structure comprises 325 residues: RNA ligase 1 (325 aa).

Requires Mg(2+) as cofactor. It depends on Mn(2+) as a cofactor. Post-translationally, AMPylates itself (auto-AMPylation).

It catalyses the reaction ATP + (ribonucleotide)n-3'-hydroxyl + 5'-phospho-(ribonucleotide)m = (ribonucleotide)n+m + AMP + diphosphate.. In terms of biological role, functions as an RNA ligase, in vitro. The ligation reaction entails three nucleotidyl transfer steps. In the first step, the RNA ligase reacts with ATP in the absence of nucleic acid to form a covalent ligase-AMP intermediate and release pyrophosphate. In step 2, the ligase-AMP binds to the nucleic acid and transfers the adenylate to the 5'-PO4 terminus to form an adenylylated intermediate. In step 3, the RNA ligase directs the attack of the 3'-OH on the 5'-phosphoanhydride linkage, resulting in a repaired 3'-5' phosphodiester and release of AMP. Exhibits selectivity for single-stranded RNA substrates and may not have nick-sealing activity on double-stranded DNA-RNA hybrids. May play a role in maintaining RNA integrity under stress conditions, for example in response to reactive oxygen species (ROS). This Danio rerio (Zebrafish) protein is RNA ligase 1.